The sequence spans 55 residues: Small ribosomal subunit protein eS31 (55 aa).

Zn(2+) contacts are provided by C26, C29, C44, and C47.

This sequence belongs to the eukaryotic ribosomal protein eS31 family. In terms of assembly, part of the 30S ribosomal subunit. Requires Zn(2+) as cofactor.

This chain is Small ribosomal subunit protein eS31, found in Archaeoglobus fulgidus (strain ATCC 49558 / DSM 4304 / JCM 9628 / NBRC 100126 / VC-16).